A 289-amino-acid chain; its full sequence is Rhodopsin (289 aa).

Topologically, residues 1–7 (YLVSPAG) are extracellular. Residues 8 to 32 (YAALGAYMFLLILVGFPVNFLTLYV) traverse the membrane as a helical segment. Residues 33-44 (TLEHKKLRTPLN) are Cytoplasmic-facing. Residues 45–67 (YILLNLAVADLFMVLGGFTTTMY) traverse the membrane as a helical segment. Over 68–81 (TSMHGYFVLGRLGC) the chain is Extracellular. Residues Cys-81 and Cys-158 are joined by a disulfide bond. Residues 82 to 104 (NLEGFFVTLGGEIALWSLVVLAI) traverse the membrane as a helical segment. The 'Ionic lock' involved in activated form stabilization motif lies at 105–107 (ERW). Topologically, residues 105 to 123 (ERWIGVFKSIRNFRFTEDH) are cytoplasmic. Residues 124–144 (AIMGLGFSWVMAATCAVPPLV) traverse the membrane as a helical segment. Residues 145–173 (GWLRYIPEGMQCSCGVDYYTRAEGFNNES) lie on the Extracellular side of the membrane. Residue Asn-171 is glycosylated (N-linked (GlcNAc...) asparagine). Residues 174–195 (FVIYMFIVHFLIPLIVIFFCYG) form a helical membrane-spanning segment. Over 196-223 (RLLCAVKEAAAAQQESETTQRAEKEVSR) the chain is Cytoplasmic. The helical transmembrane segment at 224–245 (MVVIMVIGYLVCWLPYASVAWW) threads the bilayer. The Extracellular portion of the chain corresponds to 246-257 (IFCNQGSEFGPI). The helical transmembrane segment at 258 to 279 (FMTLPAFFAKSPAIYNPLIYIC) threads the bilayer. Lys-267 is modified (N6-(retinylidene)lysine). Residues 280–289 (MNKQFPHCMI) are Cytoplasmic-facing.

The protein belongs to the G-protein coupled receptor 1 family. Opsin subfamily. In terms of processing, phosphorylated on some or all of the serine and threonine residues present in the C-terminal region. Post-translationally, contains one covalently linked retinal chromophore.

The protein localises to the membrane. It is found in the cell projection. Its subcellular location is the cilium. It localises to the photoreceptor outer segment. Photoreceptor required for image-forming vision at low light intensity. While most salt water fish species use retinal as chromophore, most freshwater fish use 3-dehydroretinal, or a mixture of retinal and 3-dehydroretinal. Light-induced isomerization of 11-cis to all-trans retinal triggers a conformational change that activates signaling via G-proteins. Subsequent receptor phosphorylation mediates displacement of the bound G-protein alpha subunit by arrestin and terminates signaling. This Leocottus kesslerii (Kessler's sculpin) protein is Rhodopsin (rho).